The chain runs to 595 residues: Putative histone-lysine N-methyltransferase PRDM6 (595 aa).

The disordered stretch occupies residues 27-90; that stretch reads FPHGGAGPLK…STPASSSTSA (64 aa). The segment covering 30-40 has biased composition (gly residues); that stretch reads GGAGPLKGSGA. The span at 49–59 shows a compositional bias: pro residues; it reads PLQPPPPPPPP. Low complexity predominate over residues 71–90; it reads PRPASLSSASSTPASSSTSA. Residues 246-365 form the SET domain; sequence REVCLCTSTV…RGTELLVWYN (120 aa). A C2H2-type 1; degenerate zinc finger spans residues 473-495; sequence WKCGQCFKTFTQRILLQMHVCTQ. C2H2-type zinc fingers lie at residues 501 to 523 and 529 to 551; these read YQCG…VVTH and FKCG…IRTH. The C2H2-type 4; degenerate zinc-finger motif lies at 557-579; sequence FKCERCERSFTQATQLSRHQRMP.

Belongs to the class V-like SAM-binding methyltransferase superfamily. In terms of assembly, interacts with HDAC1, HDAC2, HDAC3, CBX1 and EP300.

It localises to the nucleus. It catalyses the reaction L-lysyl(20)-[histone H4] + S-adenosyl-L-methionine = N(6)-methyl-L-lysyl(20)-[histone H4] + S-adenosyl-L-homocysteine + H(+). In terms of biological role, putative histone methyltransferase that acts as a transcriptional repressor of smooth muscle gene expression. Promotes the transition from differentiated to proliferative smooth muscle by suppressing differentiation and maintaining the proliferative potential of vascular smooth muscle cells. Also plays a role in endothelial cells by inhibiting endothelial cell proliferation, survival and differentiation. It is unclear whether it has histone methyltransferase activity in vivo. According to some authors, it does not act as a histone methyltransferase by itself and represses transcription by recruiting EHMT2/G9a. According to others, it possesses histone methyltransferase activity when associated with other proteins and specifically methylates 'Lys-20' of histone H4 in vitro. 'Lys-20' methylation represents a specific tag for epigenetic transcriptional repression. The polypeptide is Putative histone-lysine N-methyltransferase PRDM6 (PRDM6) (Homo sapiens (Human)).